A 304-amino-acid polypeptide reads, in one-letter code: Proteasome subunit beta (304 aa).

Positions M1–G65 are cleaved as a propeptide — removed in mature form; by autocatalysis. T66 functions as the Nucleophile in the catalytic mechanism.

Belongs to the peptidase T1B family. As to quaternary structure, the 20S proteasome core is composed of 14 alpha and 14 beta subunits that assemble into four stacked heptameric rings, resulting in a barrel-shaped structure. The two inner rings, each composed of seven catalytic beta subunits, are sandwiched by two outer rings, each composed of seven alpha subunits. The catalytic chamber with the active sites is on the inside of the barrel. Has a gated structure, the ends of the cylinder being occluded by the N-termini of the alpha-subunits. Is capped by the proteasome-associated ATPase, ARC.

It is found in the cytoplasm. It catalyses the reaction Cleavage of peptide bonds with very broad specificity.. It participates in protein degradation; proteasomal Pup-dependent pathway. Its activity is regulated as follows. The formation of the proteasomal ATPase ARC-20S proteasome complex, likely via the docking of the C-termini of ARC into the intersubunit pockets in the alpha-rings, may trigger opening of the gate for substrate entry. Interconversion between the open-gate and close-gate conformations leads to a dynamic regulation of the 20S proteasome proteolysis activity. Its function is as follows. Component of the proteasome core, a large protease complex with broad specificity involved in protein degradation. The chain is Proteasome subunit beta from Mycobacterium sp. (strain JLS).